We begin with the raw amino-acid sequence, 205 residues long: Large ribosomal subunit protein uL13 (205 aa).

Belongs to the universal ribosomal protein uL13 family.

The polypeptide is Large ribosomal subunit protein uL13 (RPL13A) (Lupinus luteus (European yellow lupine)).